The chain runs to 310 residues: Elongation factor Ts (310 aa).

The involved in Mg(2+) ion dislocation from EF-Tu stretch occupies residues 80–83; the sequence is TDFV.

This sequence belongs to the EF-Ts family.

It is found in the cytoplasm. In terms of biological role, associates with the EF-Tu.GDP complex and induces the exchange of GDP to GTP. It remains bound to the aminoacyl-tRNA.EF-Tu.GTP complex up to the GTP hydrolysis stage on the ribosome. The sequence is that of Elongation factor Ts from Beijerinckia indica subsp. indica (strain ATCC 9039 / DSM 1715 / NCIMB 8712).